The sequence spans 152 residues: Cytochrome c-type biogenesis protein CcmE (152 aa).

The Cytoplasmic segment spans residues M1–R9. Residues I10–A30 traverse the membrane as a helical; Signal-anchor for type II membrane protein segment. Residues L31–S152 lie on the Periplasmic side of the membrane. Residues H123 and Y127 each contribute to the heme site.

This sequence belongs to the CcmE/CycJ family.

It is found in the cell inner membrane. Its function is as follows. Heme chaperone required for the biogenesis of c-type cytochromes. Transiently binds heme delivered by CcmC and transfers the heme to apo-cytochromes in a process facilitated by CcmF and CcmH. The polypeptide is Cytochrome c-type biogenesis protein CcmE (Jannaschia sp. (strain CCS1)).